The following is a 397-amino-acid chain: Cysteine desulfurase (397 aa).

Pyridoxal 5'-phosphate is bound by residues N148, Q176, and 196-198 (SAH). At K199 the chain carries N6-(pyridoxal phosphate)lysine. T234 provides a ligand contact to pyridoxal 5'-phosphate. Residue C321 is the Cysteine persulfide intermediate of the active site. C321 contacts [2Fe-2S] cluster.

Belongs to the class-V pyridoxal-phosphate-dependent aminotransferase family. NifS/IscS subfamily. Homodimer. Pyridoxal 5'-phosphate serves as cofactor.

It catalyses the reaction (sulfur carrier)-H + L-cysteine = (sulfur carrier)-SH + L-alanine. In terms of biological role, catalyzes the removal of elemental sulfur atoms from cysteine to produce alanine. Seems to participate in the biosynthesis of the nitrogenase metalloclusters by providing the inorganic sulfur required for the Fe-S core formation. The polypeptide is Cysteine desulfurase (Klebsiella pneumoniae).